Here is a 648-residue protein sequence, read N- to C-terminus: Pumilio homolog 3 (648 aa).

The tract at residues 1–124 (MEVKGKKQFT…KKKKELKQSR (124 aa)) is disordered. Residues 17–27 (AQEKNRFHKNS) show a composition bias toward basic and acidic residues. At Lys33 the chain carries N6-acetyllysine. Residues 60–69 (LGKKGVKQFK) are compositionally biased toward basic residues. The span at 94–124 (FQPDGRSDESAAKKPKWDDFKKKKKELKQSR) shows a compositional bias: basic and acidic residues. Residues 106 to 118 (KKPKWDDFKKKKK) carry the Nuclear localization signal motif. The 368-residue stretch at 143 to 510 (EILRRKDCDK…VVLDKSACVL (368 aa)) folds into the PUM-HD domain. Pumilio repeat units follow at residues 177 to 212 (HDST…LSKA), 213 to 248 (KYSR…MLRH), 249 to 277 (AEAS…ELYG), 289 to 325 (RTLD…VIKH), 326 to 361 (SLVH…LAHT), 362 to 397 (HDGA…VANG), 398 to 435 (QYSH…IVND), 436 to 504 (KYGR…VVLD), 505 to 551 (KSAC…IAEH), 552 to 596 (PAGH…WASV), and 597 to 636 (NRGA…KSTS). Residues 289 to 297 (RTLDKVLEV) are HA-8.

Interacts with PARP1 (via catalytic domain). In terms of tissue distribution, widely expressed.

The protein localises to the nucleus. The protein resides in the nucleolus. It localises to the nucleoplasm. Its subcellular location is the chromosome. Its function is as follows. Inhibits the poly(ADP-ribosyl)ation activity of PARP1 and the degradation of PARP1 by CASP3 following genotoxic stress. Binds to double-stranded RNA or DNA without sequence specificity. Involved in development of the eye and of primordial germ cells. This Homo sapiens (Human) protein is Pumilio homolog 3.